The primary structure comprises 343 residues: Dihydroorotate dehydrogenase (quinone) (343 aa).

FMN-binding positions include 65–69 (AGFDK) and Thr89. A substrate-binding site is contributed by Lys69. A substrate-binding site is contributed by 114–118 (NRMGF). Residues Asn145 and Asn178 each coordinate FMN. Position 178 (Asn178) interacts with substrate. Ser181 functions as the Nucleophile in the catalytic mechanism. Asn183 provides a ligand contact to substrate. Lys215 and Thr243 together coordinate FMN. Residue 244-245 (NT) coordinates substrate. FMN contacts are provided by residues Gly269, Gly298, and 319–320 (YT).

The protein belongs to the dihydroorotate dehydrogenase family. Type 2 subfamily. Monomer. It depends on FMN as a cofactor.

The protein localises to the cell membrane. The catalysed reaction is (S)-dihydroorotate + a quinone = orotate + a quinol. It participates in pyrimidine metabolism; UMP biosynthesis via de novo pathway; orotate from (S)-dihydroorotate (quinone route): step 1/1. Functionally, catalyzes the conversion of dihydroorotate to orotate with quinone as electron acceptor. The polypeptide is Dihydroorotate dehydrogenase (quinone) (Leifsonia xyli subsp. xyli (strain CTCB07)).